Here is a 185-residue protein sequence, read N- to C-terminus: MISVNDFRTGLTIEVDGDIWRVMDFQHVKPGKGAAFVRSKLRNLRTGAIQEKTFRAGEKVNRAQIDTRKMQYLYANGDQHVFMDMETYEQIELPAKQIEHELKFLKENMEVYIMMYQGETIGVELPNTVELKVVETEPGIKGDTASGGSKPAKLETGLVVQVPFFVNEGDTLIINTADGTYVSRA.

Belongs to the elongation factor P family.

It is found in the cytoplasm. It participates in protein biosynthesis; polypeptide chain elongation. In terms of biological role, involved in peptide bond synthesis. Stimulates efficient translation and peptide-bond synthesis on native or reconstituted 70S ribosomes in vitro. Probably functions indirectly by altering the affinity of the ribosome for aminoacyl-tRNA, thus increasing their reactivity as acceptors for peptidyl transferase. In Geobacillus sp. (strain WCH70), this protein is Elongation factor P.